The sequence spans 98 residues: NADH-ubiquinone oxidoreductase chain 4L (98 aa).

Helical transmembrane passes span 1-21 (MSLT…GLLM), 29-49 (SLLC…MVIL), and 61-81 (IILL…LVMV).

Belongs to the complex I subunit 4L family. As to quaternary structure, core subunit of respiratory chain NADH dehydrogenase (Complex I) which is composed of 45 different subunits.

The protein resides in the mitochondrion inner membrane. The catalysed reaction is a ubiquinone + NADH + 5 H(+)(in) = a ubiquinol + NAD(+) + 4 H(+)(out). Functionally, core subunit of the mitochondrial membrane respiratory chain NADH dehydrogenase (Complex I) which catalyzes electron transfer from NADH through the respiratory chain, using ubiquinone as an electron acceptor. Part of the enzyme membrane arm which is embedded in the lipid bilayer and involved in proton translocation. The protein is NADH-ubiquinone oxidoreductase chain 4L (MT-ND4L) of Vampyressa thyone (Northern little yellow-eared bat).